The sequence spans 105 residues: MSDSEYLTRAEAALAAIERALDDTDADIELERSGNVLTLEFENRTKIIVNLQPPMSEIWIAAKAGGFHFRFVDGEWRDTRSGTEFFAALSEYATQQAGEPVHFKA.

The protein belongs to the frataxin family.

Functionally, involved in iron-sulfur (Fe-S) cluster assembly. May act as a regulator of Fe-S biogenesis. The chain is Iron-sulfur cluster assembly protein CyaY from Paraburkholderia phytofirmans (strain DSM 17436 / LMG 22146 / PsJN) (Burkholderia phytofirmans).